We begin with the raw amino-acid sequence, 290 residues long: Acetylglutamate kinase (290 aa).

Substrate-binding positions include glycine 65–glycine 66, arginine 87, and asparagine 186.

Belongs to the acetylglutamate kinase family. ArgB subfamily.

The protein localises to the cytoplasm. It catalyses the reaction N-acetyl-L-glutamate + ATP = N-acetyl-L-glutamyl 5-phosphate + ADP. The protein operates within amino-acid biosynthesis; L-arginine biosynthesis; N(2)-acetyl-L-ornithine from L-glutamate: step 2/4. Functionally, catalyzes the ATP-dependent phosphorylation of N-acetyl-L-glutamate. The chain is Acetylglutamate kinase from Mycolicibacterium gilvum (strain PYR-GCK) (Mycobacterium gilvum (strain PYR-GCK)).